A 694-amino-acid chain; its full sequence is Heat shock protein homolog SSE1 (694 aa).

The tract at residues 671–694 is disordered; it reads AQRSADSEAKKDATPEGDAQMDLD. Positions 675 to 684 are enriched in basic and acidic residues; the sequence is ADSEAKKDAT.

This sequence belongs to the heat shock protein 70 family.

Its subcellular location is the cytoplasm. The polypeptide is Heat shock protein homolog SSE1 (SSE1) (Candida glabrata (strain ATCC 2001 / BCRC 20586 / JCM 3761 / NBRC 0622 / NRRL Y-65 / CBS 138) (Yeast)).